The following is a 241-amino-acid chain: Ribonuclease PH (241 aa).

Residues arginine 87 and 125–127 (GTR) contribute to the phosphate site.

The protein belongs to the RNase PH family. Homohexameric ring arranged as a trimer of dimers.

It carries out the reaction tRNA(n+1) + phosphate = tRNA(n) + a ribonucleoside 5'-diphosphate. Its function is as follows. Phosphorolytic 3'-5' exoribonuclease that plays an important role in tRNA 3'-end maturation. Removes nucleotide residues following the 3'-CCA terminus of tRNAs; can also add nucleotides to the ends of RNA molecules by using nucleoside diphosphates as substrates, but this may not be physiologically important. Probably plays a role in initiation of 16S rRNA degradation (leading to ribosome degradation) during starvation. The protein is Ribonuclease PH of Salinispora tropica (strain ATCC BAA-916 / DSM 44818 / JCM 13857 / NBRC 105044 / CNB-440).